The primary structure comprises 645 residues: MPRRRLLKLLFIGKLRVSCKHYSTAGDPTKLVNLSEFTPDKIRNFGIVAHVDHGKSTLADRLLEMCGAVPPGQKQMLDKLQVERERGITVKAQTAALRHRGYLLNLIDTPGHVDFSAEVSRSLAVCDGILLLVAANQGVQAQTIANFWLAFEKNIQIIPVINKIDLPGADIKSVETQLKNLFEFNPEECLHISAKSGLNVDKVLEAIIDRVPAPTAIIDAPFRSMIFDSYFDHFRGAIAHIMVKEGSVKKGDKIQSYQNEKVYDVSEVGVMRPEMVKCTELRAGQVGYLVCNMRTVNEAVVGETLFAETTSRDSVKTFAEIKGVKPTVYAGLFPVETSDYESLKQAVERLCLNDPSVTVIPDSSKALGLGWRIGFLGVLHMEVFGARLSQEYDASVILCQPSVEYRAKIKDNETIRKKRYDGMEEIRILDPSKFPDESDVDSFLEPMVKVRMIVPNEMMGTVNGLCSECRGERGEITSIDSTRLVILWRLPLAEVAVDFFERLKKLTSGYASFDYEPDGWQDTRLVKLTILINSKEVSEFSQIIPAAMARDRAKILVQRLKREIPRQQFEVTIKACIGSSTKALSQIVIQPMKRDFSQLLKGNFGGGGMERLNKKLSHQKKGKERMKMVGNVQIPKEAFLNVLKR.

In terms of domain architecture, tr-type G spans 40–215 (DKIRNFGIVA…AIIDRVPAPT (176 aa)). GTP-binding positions include 49–56 (AHVDHGKS), 108–112 (DTPGH), and 162–165 (NKID).

The protein belongs to the TRAFAC class translation factor GTPase superfamily. Classic translation factor GTPase family. LepA subfamily.

It localises to the mitochondrion inner membrane. It carries out the reaction GTP + H2O = GDP + phosphate + H(+). Its function is as follows. Promotes mitochondrial protein synthesis. May act as a fidelity factor of the translation reaction, by catalyzing a one-codon backward translocation of tRNAs on improperly translocated ribosomes. Binds to mitochondrial ribosomes in a GTP-dependent manner. The chain is Translation factor GUF1 homolog, mitochondrial from Caenorhabditis elegans.